Here is a 497-residue protein sequence, read N- to C-terminus: Glycerol kinase (497 aa).

Thr-12 provides a ligand contact to ADP. Residues Thr-12, Thr-13, and Ser-14 each coordinate ATP. Thr-12 lines the sn-glycerol 3-phosphate pocket. Arg-16 is an ADP binding site. 4 residues coordinate sn-glycerol 3-phosphate: Arg-82, Glu-83, Tyr-134, and Asp-243. Residues Arg-82, Glu-83, Tyr-134, Asp-243, and Gln-244 each contribute to the glycerol site. ADP contacts are provided by Thr-265 and Gly-308. 4 residues coordinate ATP: Thr-265, Gly-308, Gln-312, and Gly-409. ADP-binding residues include Gly-409 and Asn-413.

Belongs to the FGGY kinase family. As to quaternary structure, homotetramer and homodimer (in equilibrium).

The enzyme catalyses glycerol + ATP = sn-glycerol 3-phosphate + ADP + H(+). It functions in the pathway polyol metabolism; glycerol degradation via glycerol kinase pathway; sn-glycerol 3-phosphate from glycerol: step 1/1. Activated by phosphorylation and inhibited by fructose 1,6-bisphosphate (FBP). In terms of biological role, key enzyme in the regulation of glycerol uptake and metabolism. Catalyzes the phosphorylation of glycerol to yield sn-glycerol 3-phosphate. The sequence is that of Glycerol kinase from Thermoanaerobacter sp. (strain X514).